Consider the following 298-residue polypeptide: Leucine-rich repeat-containing protein 38 (298 aa).

A signal peptide spans 1–31 (MSLCVAPRHPTGAAAALGLGSLLVLLGPGRA). 2 disulfides stabilise this stretch: cysteine 32–cysteine 38 and cysteine 36–cysteine 46. Residues 32 to 60 (CPAGCACTDPHTVDCRDRGLPSVPDPFPL) enclose the LRRNT domain. Residues 32-251 (CPAGCACTDP…ECKFSLSLTD (220 aa)) are Extracellular-facing. 5 LRR repeats span residues 61 to 82 (DVRK…FFIF), 85 to 106 (DLVY…TFSG), 109 to 130 (KLAF…AFRS), 133 to 154 (RLVK…AFES), and 157 to 177 (SLQV…AALD). The N-linked (GlcNAc...) asparagine glycan is linked to asparagine 119. Positions 190–245 (NPWLCDCDFAHLFSWIQENTSKLPKGLDAIQCSLPMEDRRVALRELSEASFSECKF) constitute an LRRCT domain. Cystine bridges form between cysteine 194/cysteine 221 and cysteine 196/cysteine 243. The helical transmembrane segment at 252-272 (LFIIIFSGVAVSIAAIISSFF) threads the bilayer. At 273 to 298 (LATVVQCFQRCAPNKDTEDEDDDEDD) the chain is on the cytoplasmic side.

As to quaternary structure, interacts with KCNMA1.

It localises to the cell membrane. In terms of biological role, auxiliary protein of the large-conductance, voltage and calcium-activated potassium channel (BK alpha). Modulates gating properties by producing a marked shift in the BK channel's voltage dependence of activation in the hyperpolarizing direction, and in the absence of calcium. The sequence is that of Leucine-rich repeat-containing protein 38 (Lrrc38) from Mus musculus (Mouse).